The sequence spans 295 residues: Protease HtpX (295 aa).

The next 2 helical transmembrane spans lie at 4-24 (ILLFVATNLAVVLVASITLSL) and 41-61 (SSLLVFCAVFGFAGSLVSLFI). Residue H147 participates in Zn(2+) binding. E148 is an active-site residue. Position 151 (H151) interacts with Zn(2+). 2 helical membrane passes run 158–178 (VTLALVQGVVNTFVMFFARII) and 199–219 (VATIVAELILGILASMIVMWF). E224 provides a ligand contact to Zn(2+).

Belongs to the peptidase M48B family. The cofactor is Zn(2+).

The protein localises to the cell inner membrane. The polypeptide is Protease HtpX (Pseudomonas putida (strain GB-1)).